The primary structure comprises 299 residues: Acetylglutamate kinase (299 aa).

Residues 72 to 73 (GG), arginine 94, and asparagine 196 each bind substrate.

It belongs to the acetylglutamate kinase family. ArgB subfamily.

It is found in the cytoplasm. The catalysed reaction is N-acetyl-L-glutamate + ATP = N-acetyl-L-glutamyl 5-phosphate + ADP. It participates in amino-acid biosynthesis; L-arginine biosynthesis; N(2)-acetyl-L-ornithine from L-glutamate: step 2/4. Functionally, catalyzes the ATP-dependent phosphorylation of N-acetyl-L-glutamate. The protein is Acetylglutamate kinase of Burkholderia cenocepacia (strain HI2424).